The following is a 453-amino-acid chain: Probable glycine dehydrogenase (decarboxylating) subunit 1 (453 aa).

The protein belongs to the GcvP family. N-terminal subunit subfamily. As to quaternary structure, the glycine cleavage system is composed of four proteins: P, T, L and H. In this organism, the P 'protein' is a heterodimer of two subunits.

The enzyme catalyses N(6)-[(R)-lipoyl]-L-lysyl-[glycine-cleavage complex H protein] + glycine + H(+) = N(6)-[(R)-S(8)-aminomethyldihydrolipoyl]-L-lysyl-[glycine-cleavage complex H protein] + CO2. The glycine cleavage system catalyzes the degradation of glycine. The P protein binds the alpha-amino group of glycine through its pyridoxal phosphate cofactor; CO(2) is released and the remaining methylamine moiety is then transferred to the lipoamide cofactor of the H protein. The protein is Probable glycine dehydrogenase (decarboxylating) subunit 1 of Dictyoglomus turgidum (strain DSM 6724 / Z-1310).